The chain runs to 616 residues: Probable Xaa-Pro aminopeptidase P (616 aa).

4 residues coordinate Mn(2+): Asp413, Asp424, Glu522, and Glu536.

It belongs to the peptidase M24B family. Mn(2+) serves as cofactor.

The catalysed reaction is Release of any N-terminal amino acid, including proline, that is linked to proline, even from a dipeptide or tripeptide.. In terms of biological role, catalyzes the removal of a penultimate prolyl residue from the N-termini of peptides. The polypeptide is Probable Xaa-Pro aminopeptidase P (AMPP) (Paracoccidioides brasiliensis (strain Pb18)).